Consider the following 496-residue polypeptide: Putative ammonium transporter 1 member 5 (496 aa).

11 consecutive transmembrane segments (helical) span residues 50 to 70, 85 to 105, 131 to 151, 156 to 176, 202 to 222, 246 to 266, 284 to 306, 314 to 334, 336 to 356, 369 to 389, and 422 to 442; these read LLFSAYLVFAMQLGFAMLCAG, VLDAAAGGLFYYLFGYAFAFG, FFLYQWAFAIAAAGITSGSIA, FVAYLIYSSFLTGFVYPVVSH, FAGSGVVHMVGGIAGLWGALI, LVVLGTFLLWFGWYGFNPGSF, GIGRTAVTTTLSGCTAALTTLFG, WNVTDVCNGLLGGFAAITAGC, VVDPWAAIVCGFVASLVLIGC, LEAAQLHGGCGAWGLIFVGLF, and LVQIIVIVGWVSATMGTLFFI. Ser485 carries the phosphoserine modification.

Belongs to the ammonia transporter channel (TC 1.A.11.2) family.

Its subcellular location is the membrane. In terms of biological role, involved in ammonium transport. This Arabidopsis thaliana (Mouse-ear cress) protein is Putative ammonium transporter 1 member 5 (AMT1-5).